Reading from the N-terminus, the 750-residue chain is Photosystem I P700 chlorophyll a apoprotein A1 (750 aa).

8 helical membrane passes run 70–93 (VFSA…FHGA), 156–179 (LYCT…FHYH), 195–219 (LNHH…HVSL), 291–309 (IAHH…GHMY), 346–369 (WHAQ…HHMY), 385–411 (LSLF…IFMV), 433–455 (AIIS…LYIH), and 531–549 (FLVH…LILL). [4Fe-4S] cluster contacts are provided by Cys573 and Cys582. 2 helical membrane passes run 589–610 (HVFL…HFSW) and 664–686 (LSAY…MFLF). Position 675 (His675) interacts with chlorophyll a'. 2 residues coordinate chlorophyll a: Met683 and Tyr691. Residue Trp692 coordinates phylloquinone. A helical membrane pass occupies residues 724-744 (AVGVTHYLLGGIATTWAFFLA).

Belongs to the PsaA/PsaB family. The PsaA/B heterodimer binds the P700 chlorophyll special pair and subsequent electron acceptors. PSI consists of a core antenna complex that captures photons, and an electron transfer chain that converts photonic excitation into a charge separation. The eukaryotic PSI reaction center is composed of at least 11 subunits. Requires P700 is a chlorophyll a/chlorophyll a' dimer, A0 is one or more chlorophyll a, A1 is one or both phylloquinones and FX is a shared 4Fe-4S iron-sulfur center. as cofactor.

It is found in the plastid. Its subcellular location is the chloroplast thylakoid membrane. It catalyses the reaction reduced [plastocyanin] + hnu + oxidized [2Fe-2S]-[ferredoxin] = oxidized [plastocyanin] + reduced [2Fe-2S]-[ferredoxin]. In terms of biological role, psaA and PsaB bind P700, the primary electron donor of photosystem I (PSI), as well as the electron acceptors A0, A1 and FX. PSI is a plastocyanin-ferredoxin oxidoreductase, converting photonic excitation into a charge separation, which transfers an electron from the donor P700 chlorophyll pair to the spectroscopically characterized acceptors A0, A1, FX, FA and FB in turn. Oxidized P700 is reduced on the lumenal side of the thylakoid membrane by plastocyanin. The chain is Photosystem I P700 chlorophyll a apoprotein A1 from Hordeum vulgare (Barley).